We begin with the raw amino-acid sequence, 227 residues long: Small ribosomal subunit protein uS7 (227 aa).

2 stretches are compositionally biased toward acidic residues: residues 1–12 (MSESDTDPDIDD) and 20–31 (NDVDVAVDESES). A disordered region spans residues 1–43 (MSESDTDPDIDDDAHNNGDNDVDVAVDESESAETTTDTDTASA). A compositionally biased stretch (low complexity) spans 32-43 (AETTTDTDTASA).

It belongs to the universal ribosomal protein uS7 family. In terms of assembly, part of the 30S ribosomal subunit.

Its function is as follows. One of the primary rRNA binding proteins, it binds directly to 16S rRNA where it nucleates assembly of the head domain of the 30S subunit. Is located at the subunit interface close to the decoding center. In Haloquadratum walsbyi (strain DSM 16790 / HBSQ001), this protein is Small ribosomal subunit protein uS7.